The primary structure comprises 491 residues: Protein nucleotidyltransferase YdiU (491 aa).

ATP contacts are provided by G94, G96, R97, K117, D129, G130, R180, and R187. D256 functions as the Proton acceptor in the catalytic mechanism. 2 residues coordinate Mg(2+): N257 and D266. An ATP-binding site is contributed by D266.

The protein belongs to the SELO family. Mg(2+) is required as a cofactor. It depends on Mn(2+) as a cofactor.

The catalysed reaction is L-seryl-[protein] + ATP = 3-O-(5'-adenylyl)-L-seryl-[protein] + diphosphate. The enzyme catalyses L-threonyl-[protein] + ATP = 3-O-(5'-adenylyl)-L-threonyl-[protein] + diphosphate. It carries out the reaction L-tyrosyl-[protein] + ATP = O-(5'-adenylyl)-L-tyrosyl-[protein] + diphosphate. It catalyses the reaction L-histidyl-[protein] + UTP = N(tele)-(5'-uridylyl)-L-histidyl-[protein] + diphosphate. The catalysed reaction is L-seryl-[protein] + UTP = O-(5'-uridylyl)-L-seryl-[protein] + diphosphate. The enzyme catalyses L-tyrosyl-[protein] + UTP = O-(5'-uridylyl)-L-tyrosyl-[protein] + diphosphate. Functionally, nucleotidyltransferase involved in the post-translational modification of proteins. It can catalyze the addition of adenosine monophosphate (AMP) or uridine monophosphate (UMP) to a protein, resulting in modifications known as AMPylation and UMPylation. The chain is Protein nucleotidyltransferase YdiU from Alkaliphilus metalliredigens (strain QYMF).